An 843-amino-acid chain; its full sequence is Alpha-L-fucosidase 2 (843 aa).

Residues 1–27 form the signal peptide; it reads MAEKSSFFVHFSCLLLLLTIIITCGEG. N62, N253, N365, and N605 each carry an N-linked (GlcNAc...) asparagine glycan.

Belongs to the glycosyl hydrolase 95 family. In terms of tissue distribution, ubiquitous. Highest expression in vascular tissues, leaf trichomes, root elongation zone and emerging lateral roots.

The protein localises to the secreted. The protein resides in the extracellular space. It is found in the apoplast. It catalyses the reaction an alpha-L-fucoside + H2O = L-fucose + an alcohol. In terms of biological role, hydrolyzes alpha-1,2-linked fucose. Also active on fucosylated xyloglucan oligosaccharides. No activity with 3-fucosyllactose, p-nitrophenyl-alpha-I-fucopyranoside, lacto-N-fucopentaose II, lacto-N-fucopentaose III or alpha 1,6-fucosylated chitopentaose. Involved in apoplastic xyloglucan metabolism. This chain is Alpha-L-fucosidase 2 (FUC95A), found in Arabidopsis thaliana (Mouse-ear cress).